The primary structure comprises 562 residues: Glutamate--tRNA ligase (562 aa).

The 'HIGH' region signature appears at 101–111; the sequence is PEPNGYPHIGH.

The protein belongs to the class-I aminoacyl-tRNA synthetase family. Glutamate--tRNA ligase type 2 subfamily.

The protein localises to the cytoplasm. It carries out the reaction tRNA(Glu) + L-glutamate + ATP = L-glutamyl-tRNA(Glu) + AMP + diphosphate. Functionally, catalyzes the attachment of glutamate to tRNA(Glu) in a two-step reaction: glutamate is first activated by ATP to form Glu-AMP and then transferred to the acceptor end of tRNA(Glu). This is Glutamate--tRNA ligase from Cenarchaeum symbiosum (strain A).